The chain runs to 622 residues: Cilia- and flagella-associated protein 206 (622 aa).

The tract at residues Gln-571–Arg-592 is disordered.

Belongs to the CFAP206 family.

The protein resides in the cytoplasm. Its subcellular location is the cytoskeleton. It localises to the cilium axoneme. It is found in the cilium basal body. Its function is as follows. Essential for sperm motility and is involved in the regulation of the beating frequency of motile cilia on the epithelial cells of the respiratory tract. Required for the establishment of radial spokes in sperm flagella. The sequence is that of Cilia- and flagella-associated protein 206 from Macaca fascicularis (Crab-eating macaque).